The following is a 440-amino-acid chain: Xaa-Pro dipeptidase (440 aa).

Residues Asp-244, Asp-255, His-335, Glu-380, and Glu-419 each coordinate Mn(2+).

The protein belongs to the peptidase M24B family. Bacterial-type prolidase subfamily. Mn(2+) serves as cofactor.

The catalysed reaction is Xaa-L-Pro dipeptide + H2O = an L-alpha-amino acid + L-proline. Its function is as follows. Splits dipeptides with a prolyl residue in the C-terminal position. This is Xaa-Pro dipeptidase from Shewanella denitrificans (strain OS217 / ATCC BAA-1090 / DSM 15013).